The primary structure comprises 140 residues: Ribosome maturation factor RimP (140 aa).

Belongs to the RimP family.

It is found in the cytoplasm. Its function is as follows. Required for maturation of 30S ribosomal subunits. This chain is Ribosome maturation factor RimP, found in Campylobacter jejuni subsp. jejuni serotype O:23/36 (strain 81-176).